The primary structure comprises 613 residues: MKKAKLIFKDNTPFSLDFDDFYFNSKDGLNESKFVYTHSFEWKNQENFIITESGFGIGLNFFLTLKRFLETTPSKRPKKLFYISVEAFYIEKEQLREIYQKLRFYEEFKELLEHFLKFYPKAKEGIYRFYFEDCFLDLVFEDITILKELDFKADVWYLDGFSPNKNSQMFDENLIFEVARLSKKNTQICTFSSASFLQKNLKKYGFRVEKTKGFRKREMIKAYLENELEFKDKEAYFSRTFSSLKNKKVAIIGAGISSAVLAYELSLRGFKIDVFEKHLELGKGASGNESGILSSLILKSKVKLGEFSELSFIEASRFYRQILDLNFKGVVEFAHNDLMQERFDTQRENVLFKISKNQAFLEEGGVIFPKNLVKNLFEKSKACIYFNHEFQAYKFENECFTLKFKNDIVKSDYAVLIYAMGADTKDFVFYDEMKLSKVRGQVTHLKPFLDTQFPLSSKAYICPIKDDLQVIGASYDRLDASLESKEEDDKQNIENIAEFIDKNTKLEIIGSKVGFRSYSSDRFMIVGNAYDEAFYKEEYKALLWTKDKEQKPAKMSCNLYFNFAHGSRGFSTSVLAARYLCALINNEPLCLEKKYIHAIHPARFLVRKLKKGL.

Residues 1-225 (MKKAKLIFKD…KREMIKAYLE (225 aa)) are tRNA (mnm(5)s(2)U34)-methyltransferase. The tract at residues 252-613 (IGAGISSAVL…FLVRKLKKGL (362 aa)) is FAD-dependent cmnm(5)s(2)U34 oxidoreductase.

This sequence in the N-terminal section; belongs to the methyltransferase superfamily. tRNA (mnm(5)s(2)U34)-methyltransferase family. In the C-terminal section; belongs to the DAO family. Requires FAD as cofactor.

It is found in the cytoplasm. The enzyme catalyses 5-aminomethyl-2-thiouridine(34) in tRNA + S-adenosyl-L-methionine = 5-methylaminomethyl-2-thiouridine(34) in tRNA + S-adenosyl-L-homocysteine + H(+). Catalyzes the last two steps in the biosynthesis of 5-methylaminomethyl-2-thiouridine (mnm(5)s(2)U) at the wobble position (U34) in tRNA. Catalyzes the FAD-dependent demodification of cmnm(5)s(2)U34 to nm(5)s(2)U34, followed by the transfer of a methyl group from S-adenosyl-L-methionine to nm(5)s(2)U34, to form mnm(5)s(2)U34. The sequence is that of tRNA 5-methylaminomethyl-2-thiouridine biosynthesis bifunctional protein MnmC from Campylobacter jejuni subsp. doylei (strain ATCC BAA-1458 / RM4099 / 269.97).